A 967-amino-acid polypeptide reads, in one-letter code: E3 ubiquitin-protein ligase arkadia-C (967 aa).

Disordered regions lie at residues Gln57–Leu175 and Arg193–Met276. Low complexity predominate over residues Ser112–Asp131. Positions Gly149–Arg160 are enriched in polar residues. The segment covering Ser232 to Thr251 has biased composition (low complexity). The short motif at Val280 to Glu284 is the SUMO interaction motif 1 (SIM) element. The SUMO interaction motif 2 (SIM) signature appears at Glu305–Val311. The tract at residues Leu321–Arg343 is disordered. An SUMO interaction motif 3 (SIM) motif is present at residues Val360–Thr364. Disordered regions lie at residues Asp368–Leu452, His482–Asn548, Leu629–Val657, and Pro669–Ala689. Over residues Val385–Ser395 the composition is skewed to low complexity. Over residues His482–Ser498 the composition is skewed to basic residues. The span at Leu629 to Ala642 shows a compositional bias: polar residues. Residues Ser643–Met654 are compositionally biased toward pro residues. A ubiquitin binding region spans residues Tyr880–His882. Zn(2+)-binding residues include Cys915 and Cys918. Residues Cys915–Arg956 form an RING-type; atypical zinc finger. A ubiquitin binding region spans residues Arg930 to Met934. His938 and Cys941 together coordinate Zn(2+).

This sequence belongs to the Arkadia family. In terms of assembly, monomer.

It is found in the nucleus. Its subcellular location is the cytoplasm. The protein resides in the PML body. The catalysed reaction is S-ubiquitinyl-[E2 ubiquitin-conjugating enzyme]-L-cysteine + [acceptor protein]-L-lysine = [E2 ubiquitin-conjugating enzyme]-L-cysteine + N(6)-ubiquitinyl-[acceptor protein]-L-lysine.. The protein operates within protein modification; protein ubiquitination. Its activity is regulated as follows. Binds free ubiquitin non-covalently via its RING-type zinc finger. Ubiquitin-binding leads to enhance the E3 ubiquitin-protein ligase activity by stabilizing the ubiquitin-conjugating enzyme E2 (donor ubiquitin) in the 'closed' conformation and activating ubiquitin transfer. Functionally, E3 ubiquitin-protein ligase required for mesoderm patterning during embryonic development. Acts as an enhancer of the transcriptional responses of the smad2/smad3 effectors, which are activated downstream of BMP. Acts by mediating ubiquitination and degradation of SMAD inhibitors such as smad7, inducing their proteasomal degradation and thereby enhancing the transcriptional activity of TGF-beta and BMP. Specifically binds polysumoylated chains via SUMO interaction motifs (SIMs) and mediates ubiquitination of sumoylated substrates. The regulation of the BMP-SMAD signaling is however independent of sumoylation and is not dependent of SUMO interaction motifs (SIMs). This chain is E3 ubiquitin-protein ligase arkadia-C (rnf111-c), found in Xenopus laevis (African clawed frog).